Reading from the N-terminus, the 341-residue chain is Ribulose-5-phosphate reductase 2 (341 aa).

Positions 38, 64, 65, and 144 each coordinate Zn(2+).

The protein belongs to the zinc-containing alcohol dehydrogenase family. As to quaternary structure, heterodimer together with TarI. Zn(2+) is required as a cofactor.

The enzyme catalyses D-ribitol 5-phosphate + NADP(+) = D-ribulose 5-phosphate + NADPH + H(+). The protein operates within cell wall biogenesis; poly(ribitol phosphate) teichoic acid biosynthesis. Catalyzes the NADPH dependent reduction of D-ribulose 5-phosphate to D-ribitol 5-phosphate. In Staphylococcus aureus (strain NCTC 8325 / PS 47), this protein is Ribulose-5-phosphate reductase 2.